The sequence spans 460 residues: Argininosuccinate lyase (460 aa).

The protein belongs to the lyase 1 family. Argininosuccinate lyase subfamily.

Its subcellular location is the cytoplasm. It catalyses the reaction 2-(N(omega)-L-arginino)succinate = fumarate + L-arginine. It functions in the pathway amino-acid biosynthesis; L-arginine biosynthesis; L-arginine from L-ornithine and carbamoyl phosphate: step 3/3. The chain is Argininosuccinate lyase from Streptococcus sanguinis (strain SK36).